Consider the following 103-residue polypeptide: Large ribosomal subunit protein uL24 (103 aa).

The protein belongs to the universal ribosomal protein uL24 family. As to quaternary structure, part of the 50S ribosomal subunit.

Its function is as follows. One of two assembly initiator proteins, it binds directly to the 5'-end of the 23S rRNA, where it nucleates assembly of the 50S subunit. One of the proteins that surrounds the polypeptide exit tunnel on the outside of the subunit. This chain is Large ribosomal subunit protein uL24, found in Sinorhizobium medicae (strain WSM419) (Ensifer medicae).